The following is a 238-amino-acid chain: Ribonuclease 3 (238 aa).

In terms of domain architecture, RNase III spans 11-136 (RARLEAAIGY…LIAAIYLDGG (126 aa)). Glu49 serves as a coordination point for Mg(2+). The active site involves Asp53. Positions 122 and 125 each coordinate Mg(2+). Glu125 is an active-site residue. A DRBM domain is found at 161–230 (DAKTELQEWA…AMKLLEREGV (70 aa)).

It belongs to the ribonuclease III family. In terms of assembly, homodimer. Mg(2+) is required as a cofactor.

It is found in the cytoplasm. It carries out the reaction Endonucleolytic cleavage to 5'-phosphomonoester.. Functionally, digests double-stranded RNA. Involved in the processing of primary rRNA transcript to yield the immediate precursors to the large and small rRNAs (23S and 16S). Processes some mRNAs, and tRNAs when they are encoded in the rRNA operon. Processes pre-crRNA and tracrRNA of type II CRISPR loci if present in the organism. The polypeptide is Ribonuclease 3 (Rhizobium meliloti (strain 1021) (Ensifer meliloti)).